The following is a 2454-amino-acid chain: Probable serine/threonine-protein kinase DDB_G0277071 (2454 aa).

Residues 31 to 51 (TSSLTTTTTTTTTTTTTTSTT) are compositionally biased toward low complexity. Disordered stretches follow at residues 31 to 57 (TSSL…HESN), 206 to 265 (QQQL…QKQN), 340 to 612 (PRPP…LKIE), 963 to 1051 (NNIN…NENE), 1201 to 1330 (SSDD…SNPL), and 1342 to 1528 (ISKG…SNNT). The stretch at 259–307 (KQQQKQNSQQQQQQQQQQQQQQQQQQQQQQQQQQQQQQQQQQQKLNIHE) forms a coiled coil. 2 stretches are compositionally biased toward low complexity: residues 346–399 (QQHQ…NITP) and 406–428 (PSSV…KPTS). Positions 429–444 (IGQIQSLHYHNPSLYQ) are enriched in polar residues. Composition is skewed to low complexity over residues 450 to 461 (NRNRGNNNNNNN) and 475 to 536 (SSTV…NTPN). Residues 553–568 (GGIGGGGGGGSGGGGI) are compositionally biased toward gly residues. Composition is skewed to low complexity over residues 963–1048 (NNIN…TTTN), 1201–1248 (SSDD…TGGP), 1275–1284 (NSSNNNNTSS), 1299–1324 (SGSS…PTTG), and 1346–1403 (SPAS…SVST). A compositionally biased stretch (polar residues) spans 1417–1441 (LNLSSVSKTGQASTSTPNLLNLKNI). Over residues 1442 to 1478 (PTTTNNSNSTTTTTTTTPTGKPQFSLNLSSLSKSSSS) the composition is skewed to low complexity. Positions 1479 to 1491 (TETVPPSQPNQPI) are enriched in polar residues. Residues 1509 to 1528 (STTTTTTTTTPPPINNSNNT) are compositionally biased toward low complexity. A Protein kinase domain is found at 1730–2034 (FKDLKRVAKG…TKFIAIKPTI (305 aa)). ATP contacts are provided by residues 1736 to 1744 (VAKGAYGTV) and K1760. D1858 acts as the Proton acceptor in catalysis. The 142-residue stretch at 2130-2271 (RPSKVASFMY…LCRWGKQRRN (142 aa)) folds into the Tyrosine-protein phosphatase domain. Positions 2379–2404 (NINNNNNNNSNNSKSKQQQQQQQNQN) are disordered.

The protein belongs to the protein kinase superfamily. Ser/Thr protein kinase family.

It carries out the reaction L-seryl-[protein] + ATP = O-phospho-L-seryl-[protein] + ADP + H(+). It catalyses the reaction L-threonyl-[protein] + ATP = O-phospho-L-threonyl-[protein] + ADP + H(+). The polypeptide is Probable serine/threonine-protein kinase DDB_G0277071 (Dictyostelium discoideum (Social amoeba)).